The chain runs to 481 residues: Leukocyte immunoglobulin-like receptor subfamily A member 6 (481 aa).

The first 23 residues, 1 to 23 (MTPALTALLCLGLSLGPRTHVQA), serve as a signal peptide directing secretion. One can recognise an Ig-like C2-type 1 domain in the interval 24-118 (GPLPKPTLWA…PSDPLELVVT (95 aa)). The Extracellular segment spans residues 24–447 (GPLPKPTLWA…SHAKDYTVEN (424 aa)). C49 and C98 are disulfide-bonded. N139 is a glycosylation site (N-linked (GlcNAc...) asparagine). 2 disulfide bridges follow: C144–C196 and C245–C296. Ig-like C2-type domains lie at 225–314 (PSLL…DPLN) and 323–408 (DRVS…HLLS). 2 N-linked (GlcNAc...) asparagine glycosylation sites follow: N301 and N340. A disulfide bond links C345 and C396. The segment at 418-439 (VSGPSGGPSLPPTGPPSTPASH) is disordered. Over residues 426–435 (SLPPTGPPST) the composition is skewed to pro residues. Residues 448–468 (LIRMGMAGLVLVVLGILLFEA) form a helical membrane-spanning segment. The Cytoplasmic portion of the chain corresponds to 469–481 (QHSQRSPQDAARR).

The protein resides in the membrane. Functionally, may act as receptor for class I MHC antigens. The sequence is that of Leukocyte immunoglobulin-like receptor subfamily A member 6 (LILRA6) from Pan troglodytes (Chimpanzee).